The following is a 96-amino-acid chain: Defensin-like protein 151 (96 aa).

Positions 1 to 29 (MKKPSQLSATILTIFVILAIGVMVKETLG) are cleaved as a signal peptide. Intrachain disulfides connect cysteine 35-cysteine 88, cysteine 48-cysteine 68, cysteine 53-cysteine 82, and cysteine 57-cysteine 84.

Belongs to the DEFL family.

The protein localises to the secreted. In Arabidopsis thaliana (Mouse-ear cress), this protein is Defensin-like protein 151 (LCR17).